We begin with the raw amino-acid sequence, 364 residues long: Coproporphyrin III ferrochelatase (364 aa).

Positions 29 and 118 each coordinate Fe-coproporphyrin III. Residues H169 and E250 each contribute to the Fe(2+) site.

The protein belongs to the ferrochelatase family.

The protein localises to the cytoplasm. The catalysed reaction is Fe-coproporphyrin III + 2 H(+) = coproporphyrin III + Fe(2+). It functions in the pathway porphyrin-containing compound metabolism; protoheme biosynthesis. In terms of biological role, involved in coproporphyrin-dependent heme b biosynthesis. Catalyzes the insertion of ferrous iron into coproporphyrin III to form Fe-coproporphyrin III. This Streptococcus pneumoniae serotype 2 (strain D39 / NCTC 7466) protein is Coproporphyrin III ferrochelatase.